The chain runs to 156 residues: Large ribosomal subunit protein uL11 (156 aa).

The interval 1 to 20 (MAQSVKTMVEGGKATTGPPI) is disordered.

It belongs to the universal ribosomal protein uL11 family. In terms of assembly, part of the ribosomal stalk of the 50S ribosomal subunit. Interacts with L10 and the large rRNA to form the base of the stalk. L10 forms an elongated spine to which L12 dimers bind in a sequential fashion forming a multimeric L10(L12)X complex.

Functionally, forms part of the ribosomal stalk which helps the ribosome interact with GTP-bound translation factors. This Thermoplasma acidophilum (strain ATCC 25905 / DSM 1728 / JCM 9062 / NBRC 15155 / AMRC-C165) protein is Large ribosomal subunit protein uL11.